Consider the following 56-residue polypeptide: uncharacterized protein (56 aa).

This is an uncharacterized protein from Streptomyces lividans.